A 166-amino-acid chain; its full sequence is CDP-archaeol synthase (166 aa).

4 helical membrane passes run 39 to 59 (IRGF…QMYA), 61 to 81 (ISGL…LLAI), 104 to 124 (EWFL…TLLF), and 127 to 147 (IWML…LTPL).

Belongs to the CDP-archaeol synthase family. Mg(2+) is required as a cofactor.

It is found in the cell membrane. The catalysed reaction is 2,3-bis-O-(geranylgeranyl)-sn-glycerol 1-phosphate + CTP + H(+) = CDP-2,3-bis-O-(geranylgeranyl)-sn-glycerol + diphosphate. The protein operates within membrane lipid metabolism; glycerophospholipid metabolism. In terms of biological role, catalyzes the formation of CDP-2,3-bis-(O-geranylgeranyl)-sn-glycerol (CDP-archaeol) from 2,3-bis-(O-geranylgeranyl)-sn-glycerol 1-phosphate (DGGGP) and CTP. This reaction is the third ether-bond-formation step in the biosynthesis of archaeal membrane lipids. This Methanospirillum hungatei JF-1 (strain ATCC 27890 / DSM 864 / NBRC 100397 / JF-1) protein is CDP-archaeol synthase.